A 159-amino-acid chain; its full sequence is Succinate dehydrogenase [ubiquinone] cytochrome b small subunit, mitochondrial (159 aa).

A mitochondrion-targeting transit peptide spans 1 to 30 (MLQTRLGLGALRQGRLLFAVKSFSTTSVAK). Over 31 to 65 (IFPPPPQTIKGTVNDAAVFPHHSKLHGSYHWDFER) the chain is Mitochondrial matrix. The chain crosses the membrane as a helical span at residues 66-82 (IIAIAMVPQVMIPLFTG). Topologically, residues 83 to 89 (TSHPLMD) are mitochondrial intermembrane. The chain crosses the membrane as a helical span at residues 90 to 109 (AALACTLITHAHLGFESCVI). His-99 contributes to the heme binding site. Residues 110-122 (DYFPARRFKKLSP) lie on the Mitochondrial matrix side of the membrane. An a ubiquinone-binding site is contributed by Tyr-111. A helical transmembrane segment spans residues 123–140 (LMHWILRGCTVLTLIGVY). Residues 141–159 (EFNTNDIGLTEGIKKLWKS) are Mitochondrial intermembrane-facing.

This sequence belongs to the CybS family. As to quaternary structure, forms part of complex II containing four subunits: a flavoprotein (FP), an iron-sulfur protein (IP) and a cytochrome b composed of a large and a small subunit.

The protein localises to the mitochondrion inner membrane. It functions in the pathway carbohydrate metabolism; tricarboxylic acid cycle. Its function is as follows. Membrane-anchoring subunit of succinate dehydrogenase (SDH) that is involved in complex II of the mitochondrial electron transport chain and is responsible for transferring electrons from succinate to ubiquinone (coenzyme Q). The polypeptide is Succinate dehydrogenase [ubiquinone] cytochrome b small subunit, mitochondrial (sdh4) (Schizosaccharomyces pombe (strain 972 / ATCC 24843) (Fission yeast)).